Reading from the N-terminus, the 436-residue chain is Trigger factor (436 aa).

Residues 163-248 (GDRVTVDFEG…VKKIEAAHLP (86 aa)) form the PPIase FKBP-type domain.

The protein belongs to the FKBP-type PPIase family. Tig subfamily.

The protein resides in the cytoplasm. It carries out the reaction [protein]-peptidylproline (omega=180) = [protein]-peptidylproline (omega=0). In terms of biological role, involved in protein export. Acts as a chaperone by maintaining the newly synthesized protein in an open conformation. Functions as a peptidyl-prolyl cis-trans isomerase. The chain is Trigger factor from Acidovorax ebreus (strain TPSY) (Diaphorobacter sp. (strain TPSY)).